The sequence spans 217 residues: Putative oxidative stress regulator AosR (217 aa).

The CXXXC motif lies at 5–9 (CGRRC). C5 and C9 are disulfide-bonded.

It belongs to the AosR family.

This Mycobacterium leprae (strain TN) protein is Putative oxidative stress regulator AosR.